Consider the following 130-residue polypeptide: Small ribosomal subunit protein uS8 (130 aa).

This sequence belongs to the universal ribosomal protein uS8 family. Part of the 30S ribosomal subunit. Contacts proteins S5 and S12.

In terms of biological role, one of the primary rRNA binding proteins, it binds directly to 16S rRNA central domain where it helps coordinate assembly of the platform of the 30S subunit. In Ruegeria sp. (strain TM1040) (Silicibacter sp.), this protein is Small ribosomal subunit protein uS8.